Consider the following 210-residue polypeptide: Glutathione S-transferase P (210 aa).

The 80-residue stretch at 2–81 folds into the GST N-terminal domain; that stretch reads PPYTVVYFPV…HLGRTLGLYG (80 aa). Position 4 is a phosphotyrosine; by EGFR (tyrosine 4). Residues tyrosine 8, arginine 14, tryptophan 39, lysine 45, and 52–53 each bind glutathione; that span reads QL. Threonine 62 is modified (phosphothreonine). 65-66 contributes to the glutathione binding site; that stretch reads QS. Positions 83–204 constitute a GST C-terminal domain; sequence DQREAALVDM…ASPEHVNLPI (122 aa). An N6-succinyllysine mark is found at lysine 103 and lysine 116. Lysine 128 carries the post-translational modification N6-acetyllysine.

Belongs to the GST superfamily. Pi family. As to quaternary structure, homodimer. Interacts with CDK5.

The protein localises to the cytoplasm. It is found in the mitochondrion. It localises to the nucleus. The enzyme catalyses RX + glutathione = an S-substituted glutathione + a halide anion + H(+). It catalyses the reaction prostaglandin J2 + glutathione = prostaglandin J2-S-(R)-glutathione. The catalysed reaction is prostaglandin J2 + glutathione = prostaglandin J2-S-(S)-glutathione. It carries out the reaction prostaglandin A2 + glutathione = prostaglandin A2-S-(S)-glutathione. The enzyme catalyses 11(S)-hydroxy-14(S),15(S)-epoxy-(5Z,8Z,12E)-eicosatrienoate + glutathione = (11S,15S)-dihydroxy-14(R)-S-glutathionyl-(5Z,8Z,12E)-eicosatrienoate. In terms of biological role, conjugation of reduced glutathione to a wide number of exogenous and endogenous hydrophobic electrophiles. Involved in the formation of glutathione conjugates of both prostaglandin A2 (PGA2) and prostaglandin J2 (PGJ2). Participates in the formation of novel hepoxilin regioisomers. Negatively regulates CDK5 activity via p25/p35 translocation to prevent neurodegeneration. In Macaca mulatta (Rhesus macaque), this protein is Glutathione S-transferase P (GSTP1).